The sequence spans 221 residues: Translation initiation factor 6 (221 aa).

This sequence belongs to the eIF-6 family.

In terms of biological role, binds to the 50S ribosomal subunit and prevents its association with the 30S ribosomal subunit to form the 70S initiation complex. The protein is Translation initiation factor 6 of Halorubrum lacusprofundi (strain ATCC 49239 / DSM 5036 / JCM 8891 / ACAM 34).